The sequence spans 732 residues: Acylamino-acid-releasing enzyme (732 aa).

Methionine 1 bears the N-acetylmethionine mark. Serine 187 carries the post-translational modification Phosphoserine. Catalysis depends on charge relay system residues serine 587, aspartate 675, and histidine 707.

The protein belongs to the peptidase S9C family. As to quaternary structure, homotetramer. In terms of tissue distribution, expressed in the liver (at protein level).

The protein resides in the cytoplasm. It carries out the reaction Cleavage of an N-acetyl or N-formyl amino acid from the N-terminus of a polypeptide.. Its activity is regulated as follows. Homotetramerization is required for activity. Tetramerization results in the formation of a gated channel which is involved in substrate selection and substrate access to the catalytic sites. Its function is as follows. This enzyme catalyzes the hydrolysis of the N-terminal peptide bond of an N-acetylated peptide to generate an N-acetylated amino acid and a peptide with a free N-terminus. It preferentially cleaves off Ac-Ala, Ac-Met and Ac-Ser. Also, involved in the degradation of oxidized and glycated proteins. The protein is Acylamino-acid-releasing enzyme (APEH) of Sus scrofa (Pig).